The following is a 357-amino-acid chain: Histidinol-phosphate aminotransferase (357 aa).

An N6-(pyridoxal phosphate)lysine modification is found at K212.

It belongs to the class-II pyridoxal-phosphate-dependent aminotransferase family. Histidinol-phosphate aminotransferase subfamily. In terms of assembly, homodimer. Requires pyridoxal 5'-phosphate as cofactor.

It catalyses the reaction L-histidinol phosphate + 2-oxoglutarate = 3-(imidazol-4-yl)-2-oxopropyl phosphate + L-glutamate. It participates in amino-acid biosynthesis; L-histidine biosynthesis; L-histidine from 5-phospho-alpha-D-ribose 1-diphosphate: step 7/9. The protein is Histidinol-phosphate aminotransferase of Pectobacterium atrosepticum (strain SCRI 1043 / ATCC BAA-672) (Erwinia carotovora subsp. atroseptica).